Consider the following 559-residue polypeptide: Urocanate hydratase (559 aa).

Residues 53–54, Gln131, 177–179, Glu197, Arg202, 243–244, 264–268, 274–275, and Tyr323 each bind NAD(+); these read GG, GMG, NA, QTSAH, and YL. Cys411 is a catalytic residue. Gly493 provides a ligand contact to NAD(+).

The protein belongs to the urocanase family. The cofactor is NAD(+).

The protein localises to the cytoplasm. It catalyses the reaction 4-imidazolone-5-propanoate = trans-urocanate + H2O. Its pathway is amino-acid degradation; L-histidine degradation into L-glutamate; N-formimidoyl-L-glutamate from L-histidine: step 2/3. In terms of biological role, catalyzes the conversion of urocanate to 4-imidazolone-5-propionate. In Pseudomonas aeruginosa (strain ATCC 15692 / DSM 22644 / CIP 104116 / JCM 14847 / LMG 12228 / 1C / PRS 101 / PAO1), this protein is Urocanate hydratase.